Here is a 365-residue protein sequence, read N- to C-terminus: Neuronal migration protein doublecortin (365 aa).

The disordered stretch occupies residues 11-31 (RDKTSRNMRGSRMNGLPSPTH). Phosphothreonine; by PKC is present on Thr14. Ser28 is modified (phosphoserine; by CDK5). Ser47 carries the post-translational modification Phosphoserine; by MARK1 and PKA. Doublecortin domains follow at residues 53 to 139 (KKVR…VEYT) and 180 to 263 (KLVT…AQDD). A Phosphotyrosine; by ABL modification is found at Tyr70. The residue at position 74 (Ser74) is a Phosphoserine; by PKC. The residue at position 90 (Ser90) is a Phosphoserine; by CK2. Ser110 carries the post-translational modification Phosphoserine; by PKC. Ser115 carries the phosphoserine; by CK2, MARK1 and PKA modification. Ser265 carries the post-translational modification Phosphoserine; by CK2. The interval 275–365 (KGNPSATAGP…DDSDSLGDSM (91 aa)) is disordered. A Phosphoserine; by CDK5 modification is found at Ser287. A Phosphothreonine; by CDK5 modification is found at Thr289. Phosphoserine; by PKC is present on Ser294. The residue at position 297 (Ser297) is a Phosphoserine; by CDK5. The residue at position 306 (Ser306) is a Phosphoserine; by CK2. Phosphoserine; by DYRK2 is present on Ser306. Residues 307-341 (PADSGNDQDANGTSSSQLSTPKSKQSPISTPTSPG) are compositionally biased toward polar residues. At Thr326 the chain carries Phosphothreonine; by CDK5. Phosphothreonine; by PKC and MAPK is present on Thr326. Residue Ser332 is modified to Phosphoserine; by CDK5. Phosphoserine; by MAPK is present on Ser332. Phosphothreonine; by MAPK is present on Thr336. The residue at position 339 (Ser339) is a Phosphoserine; by CDK5. At Ser339 the chain carries Phosphoserine; by MAPK. Ser342 is subject to Phosphoserine; by PKC. Residues Ser354 and Ser360 each carry the phosphoserine; by CK2 modification. Positions 356 to 365 (DDSDSLGDSM) are enriched in acidic residues.

As to quaternary structure, interacts with tubulin. Interacts with USP9X. Post-translationally, phosphorylation by MARK1, MARK2 and PKA regulates its ability to bind microtubules. Phosphorylation at Ser-265 and Ser-297 seems to occur only in neonatal brain, the levels falling precipitously by postnatal day 21. In terms of processing, ubiquitinated by MDM2, leading to its degradation by the proteasome. Ubiquitinated by MDM2 and subsequent degradation leads to reduce the dendritic spine density of olfactory bulb granule cells. In terms of tissue distribution, highly expressed in neuronal cells of fetal brain (in the majority of cells of the cortical plate, intermediate zone and ventricular zone), but not expressed in other fetal tissues. In the adult, highly expressed in the brain frontal lobe, but very low expression in other regions of brain, and not detected in heart, placenta, lung, liver, skeletal muscles, kidney and pancreas.

The protein localises to the cytoplasm. Its subcellular location is the cell projection. It is found in the neuron projection. Functionally, microtubule-associated protein required for initial steps of neuronal dispersion and cortex lamination during cerebral cortex development. May act by competing with the putative neuronal protein kinase DCLK1 in binding to a target protein. May in that way participate in a signaling pathway that is crucial for neuronal interaction before and during migration, possibly as part of a calcium ion-dependent signal transduction pathway. May be part with PAFAH1B1/LIS-1 of overlapping, but distinct, signaling pathways that promote neuronal migration. The chain is Neuronal migration protein doublecortin (DCX) from Homo sapiens (Human).